We begin with the raw amino-acid sequence, 577 residues long: MHSTEVQAKPLFSWKALGWALLYFWFFSTLLQAIIYISGYSGTNGIRDSLLFSSLWLIPVFLFPKRIKIIAAVIGVVLWAASLAALCYYVIYGQEFSQSVLFVMFETNTNEASEYLSQYFSLKIVLIALAYTAVAVLLWTRLRPVYIPKPWRYVVSFALLYGLILHPIAMNTFIKNKPFEKTLDNLASRMEPAAPWQFLTGYYQYRQQLNSLTKLLNENNALPPLANFKDESGNEPRTLVLVIGESTQRGRMSLYGYPRETTPELDALHKTDPNLTVFNNVVTSRPYTIEILQQALTFANEKNPDLYLTQPSLMNMMKQAGYKTFWITNQQTMTARNTMLTVFSRQTDKQYYMNQQRTQSAREYDTNVLKPFQEVLKDPAPKKLIIVHLLGTHIKYKYRYPEDQGKFDGNTEHVPPGLNAEELESYNDYDNANLYNDHVVASLIKDFKATDPNGFLVYFSDHGEEVYDTPPHKTQGRNEDNPTRHMYTIPFLLWTSEKWQATHPRDFSQDVDRKYSLAELIHTWSDLAGLSYDGYDPTRSVVNPQFKETTRWIGNPYKKNALIDYDTLPYGDQVGNQ.

Transmembrane regions (helical) follow at residues 17–37, 44–64, 69–89, 119–139, and 154–174; these read LGWALLYFWFFSTLLQAIIYI, NGIRDSLLFSSLWLIPVFLFP, IIAAVIGVVLWAASLAALCYY, YFSLKIVLIALAYTAVAVLLW, and VVSFALLYGLILHPIAMNTFI.

This sequence belongs to the phosphoethanolamine transferase family. EptC/CptA subfamily.

The protein localises to the cell inner membrane. The protein operates within bacterial outer membrane biogenesis; LPS core biosynthesis. In terms of biological role, catalyzes the addition of a phosphoethanolamine moiety to the outer membrane lipopolysaccharide core. Plays a role in the pathogenesis of E.coli meningitis. Required for invasion of E.coli K1 into brain microvascular endothelial cells (BMEC). Contributes to E.coli traversal across the blood-brain barrier. This is Phosphoethanolamine transferase EptC (eptC) from Escherichia coli O18:K1:H7 (strain RS218 / NMEC).